The primary structure comprises 168 residues: MSVANSRTAVYPGTFDPITNGHIDLVNRAAPLFERVVVGVAYSPSKGPALSLERRVALAQEALAAHANVEVRGFDTLLAHFVRQMGAGVLLRGLRAVSDFEYEFQMASMNRHLIPEVETLFLTPSEQYSFISSSLVREIARLGGDVSGFVPASVVEALRQVRESRAQA.

Thr14 is a substrate binding site. ATP is bound by residues 14–15 (TF) and His22. Lys46, Leu78, and Arg92 together coordinate substrate. ATP contacts are provided by residues 93-95 (GLR), Glu103, and 128-134 (YSFISSS).

It belongs to the bacterial CoaD family. As to quaternary structure, homohexamer. Mg(2+) serves as cofactor.

It is found in the cytoplasm. The enzyme catalyses (R)-4'-phosphopantetheine + ATP + H(+) = 3'-dephospho-CoA + diphosphate. Its pathway is cofactor biosynthesis; coenzyme A biosynthesis; CoA from (R)-pantothenate: step 4/5. Reversibly transfers an adenylyl group from ATP to 4'-phosphopantetheine, yielding dephospho-CoA (dPCoA) and pyrophosphate. The protein is Phosphopantetheine adenylyltransferase of Xanthomonas oryzae pv. oryzae (strain MAFF 311018).